A 715-amino-acid chain; its full sequence is Polyribonucleotide nucleotidyltransferase (715 aa).

Mg(2+)-binding residues include Asp-487 and Asp-493. One can recognise a KH domain in the interval 554 to 613 (PRLYTFKINPEKIRDVIGKGGAVIRALTEETGTTIDIQDDGTITIAATSGEAAAAARSRI). In terms of domain architecture, S1 motif spans 623–691 (GKIYEGTVLK…DRGRVKLSMK (69 aa)).

This sequence belongs to the polyribonucleotide nucleotidyltransferase family. It depends on Mg(2+) as a cofactor.

It is found in the cytoplasm. It catalyses the reaction RNA(n+1) + phosphate = RNA(n) + a ribonucleoside 5'-diphosphate. Functionally, involved in mRNA degradation. Catalyzes the phosphorolysis of single-stranded polyribonucleotides processively in the 3'- to 5'-direction. This Dechloromonas aromatica (strain RCB) protein is Polyribonucleotide nucleotidyltransferase.